The following is a 490-amino-acid chain: Katanin p60 ATPase-containing subunit A-like 1 (490 aa).

Methionine 1 carries the post-translational modification N-acetylmethionine. The segment at 96–182 is disordered; sequence PAVWPPPVPA…ASDGEIPKFD (87 aa). Basic and acidic residues predominate over residues 116–127; that stretch reads PNREVRPLRKEM. Over residues 128–139 the composition is skewed to low complexity; it reads AGVGARGPVGRA. Basic and acidic residues predominate over residues 143–169; sequence SKSEKPSASRDKDCRARGRDDKGRKNM. Phosphoserine is present on serine 174. 248–255 contacts ATP; that stretch reads GPPGTGKT.

The protein belongs to the AAA ATPase family. Katanin p60 subunit A1 subfamily. A-like 1 sub-subfamily. As to quaternary structure, interacts with KATNB1 and KATNBL1.

The protein localises to the cytoplasm. It localises to the cytoskeleton. It is found in the spindle pole. Its subcellular location is the spindle. The catalysed reaction is n ATP + n H2O + a microtubule = n ADP + n phosphate + (n+1) alpha/beta tubulin heterodimers.. In terms of biological role, regulates microtubule dynamics in Sertoli cells, a process that is essential for spermiogenesis and male fertility. Severs microtubules in an ATP-dependent manner, promoting rapid reorganization of cellular microtubule arrays. Has microtubule-severing activity in vitro. The polypeptide is Katanin p60 ATPase-containing subunit A-like 1 (Oryctolagus cuniculus (Rabbit)).